We begin with the raw amino-acid sequence, 215 residues long: Protein C' (215 aa).

The interval 12-34 (MPSFLKKILKLRGRRQEDESRSR) is disordered. The segment at 15 to 22 (FLKKILKL) is involved in self-degradation and in host STAT1 degradation. Basic and acidic residues predominate over residues 25–35 (RRQEDESRSRM). The segment covering 36–66 (LSDSSTQSYQVNQLTSEETEAGSTIPSTPSK) has biased composition (polar residues).

The protein belongs to the respirovirus protein C family. In terms of assembly, the different isoforms interact (via C-terminus) with unphosphorylated and phosphorylated human STAT1 (via N-terminus), favoring the formation of parallel STAT1 homodimers. The different isoforms do not interact with host STAT2. C protein interacts with L protein; this interaction has an inhibitory effect on viral transcription and replication. Post-translationally, protein Y1 is produced not only by alternative initiation, but also by proteolytic cleavage of C'. Only alternative initiation is detected in vitro, whereas in vivo cleavage seems to be predominant.

The protein resides in the host cytoplasm. Its function is as follows. The different products prevent the establishment of cellular antiviral state by blocking the interferon-alpha/beta (IFN-alpha/beta) and IFN-gamma signaling pathways. They inhibit IFN-alpha/beta induced tyrosine phosphorylation of STAT1 and STAT2. Blocking the IFN-alpha/beta pathway requires binding to STAT1 in the cytoplasm. They inhibit IFN-gamma induced serine phosphorylation of STAT1. Block the IFN-gamma pathway by binding to and stabilizing the parallel form of the STAT1 dimer, further inducing high-molecular-weight complex formation and inhibition of transcription by IFN-gamma. May also have a role in preventing the cell to enter apoptosis. Modulate regulation of viral transcription and replication. Overexpression inhibits the viral RNA polymerase. The absence of all C', C and Y1 proteins leads to viral delayed growth. Plays an important role in virion particles release. Modulates virion shape. In Cavia cutleri (Guinea pig), this protein is Protein C' (P/V/C).